Consider the following 380-residue polypeptide: Chaperone protein DnaJ (380 aa).

Residues 5–70 (DYYEVLGVSK…QKRQTYDQYG (66 aa)) enclose the J domain. Residues 136-214 (GKEVEIKIPT…CHGQGRVEKT (79 aa)) form a CR-type zinc finger. Residues C149, C152, C166, C169, C188, C191, C202, and C205 each coordinate Zn(2+). CXXCXGXG motif repeat units lie at residues 149-156 (CDPCDGSG), 166-173 (CTTCHGAG), 188-195 (CPTCQGQG), and 202-209 (CDSCHGQG).

This sequence belongs to the DnaJ family. Homodimer. Zn(2+) is required as a cofactor.

The protein localises to the cytoplasm. Its function is as follows. Participates actively in the response to hyperosmotic and heat shock by preventing the aggregation of stress-denatured proteins and by disaggregating proteins, also in an autonomous, DnaK-independent fashion. Unfolded proteins bind initially to DnaJ; upon interaction with the DnaJ-bound protein, DnaK hydrolyzes its bound ATP, resulting in the formation of a stable complex. GrpE releases ADP from DnaK; ATP binding to DnaK triggers the release of the substrate protein, thus completing the reaction cycle. Several rounds of ATP-dependent interactions between DnaJ, DnaK and GrpE are required for fully efficient folding. Also involved, together with DnaK and GrpE, in the DNA replication of plasmids through activation of initiation proteins. This Pseudoalteromonas translucida (strain TAC 125) protein is Chaperone protein DnaJ.